We begin with the raw amino-acid sequence, 372 residues long: uncharacterized protein (372 aa).

The helical transmembrane segment at 224–244 threads the bilayer; that stretch reads GSTVGVVIGVVIVIFIGFIII. Serine 329 carries the post-translational modification Phosphoserine.

It is found in the vacuole membrane. This is an uncharacterized protein from Saccharomyces cerevisiae (strain ATCC 204508 / S288c) (Baker's yeast).